The chain runs to 244 residues: Lectin (244 aa).

A disordered region spans residues 1-20 (TETETTSFSIPKTDQPSSPK).

Belongs to the leguminous lectin family. Homodimer. In contrast to other Lathyrus lectins which are tetramer of two alpha and two beta chains.

This Lathyrus sphaericus (Spring vetchling) protein is Lectin.